Consider the following 74-residue polypeptide: Conotoxin Vi15a (74 aa).

Residues 1–19 form the signal peptide; sequence MMPVILLLLLSLAIRCADG. Positions 20 to 43 are excised as a propeptide; sequence KAVQGDSDPSASLLTGDKNHDLPV. Residue tryptophan 72 is modified to Tryptophan amide.

Post-translationally, contains four disulfide bonds. Expressed by the venom duct.

It localises to the secreted. The protein is Conotoxin Vi15a of Conus virgo (Virgin cone).